We begin with the raw amino-acid sequence, 241 residues long: Probable cobalt-factor III C(17)-methyltransferase (241 aa).

It belongs to the precorrin methyltransferase family.

The catalysed reaction is Co(II)-factor III + S-adenosyl-L-methionine + H(+) = Co(II)-factor IV + S-adenosyl-L-homocysteine. It functions in the pathway cofactor biosynthesis; adenosylcobalamin biosynthesis; cob(II)yrinate a,c-diamide from sirohydrochlorin (anaerobic route): step 3/10. In terms of biological role, methyltransferase that likely catalyzes the ring contraction and methylation of C-17 in cobalt-factor III to form cobalt-factor IV. May also convert cobalt-precorrin-3 to cobalt-precorrin-4. In Salmonella typhimurium (strain LT2 / SGSC1412 / ATCC 700720), this protein is Probable cobalt-factor III C(17)-methyltransferase (cbiH).